The primary structure comprises 352 residues: N-acetyl-gamma-glutamyl-phosphate reductase (352 aa).

The active site involves cysteine 155.

This sequence belongs to the NAGSA dehydrogenase family. Type 1 subfamily.

The protein localises to the cytoplasm. The catalysed reaction is N-acetyl-L-glutamate 5-semialdehyde + phosphate + NADP(+) = N-acetyl-L-glutamyl 5-phosphate + NADPH + H(+). It functions in the pathway amino-acid biosynthesis; L-arginine biosynthesis; N(2)-acetyl-L-ornithine from L-glutamate: step 3/4. Catalyzes the NADPH-dependent reduction of N-acetyl-5-glutamyl phosphate to yield N-acetyl-L-glutamate 5-semialdehyde. The protein is N-acetyl-gamma-glutamyl-phosphate reductase of Brachyspira hyodysenteriae (strain ATCC 49526 / WA1).